Consider the following 368-residue polypeptide: Cobalt-precorrin-5B C(1)-methyltransferase (368 aa).

Belongs to the CbiD family.

The enzyme catalyses Co-precorrin-5B + S-adenosyl-L-methionine = Co-precorrin-6A + S-adenosyl-L-homocysteine. It participates in cofactor biosynthesis; adenosylcobalamin biosynthesis; cob(II)yrinate a,c-diamide from sirohydrochlorin (anaerobic route): step 6/10. Functionally, catalyzes the methylation of C-1 in cobalt-precorrin-5B to form cobalt-precorrin-6A. The chain is Cobalt-precorrin-5B C(1)-methyltransferase from Brucella canis (strain ATCC 23365 / NCTC 10854 / RM-666).